The sequence spans 166 residues: Bile acid 7alpha-dehydratase (166 aa).

In terms of assembly, homodimer.

It carries out the reaction 7alpha,12alpha-dihydroxy-3-oxochol-4-en-24-oyl-CoA = 12alpha-hydroxy-3-oxochola-4,6-dien-24-oyl-CoA + H2O. It catalyses the reaction 7alpha-hydroxy-3-oxochol-4-en-24-oyl-CoA = 3-oxochol-4,6-dien-24-oyl-CoA + H2O. The catalysed reaction is 7alpha,12alpha-dihydroxy-3-oxochol-4-en-24-oate = 12alpha-hydroxy-3-oxochola-4,6-dien-24-oate + H2O. The enzyme catalyses 7alpha-hydroxy-3-oxochol-4-en-24-oate = 3-oxochola-4,6-dien-24-oate + H2O. It functions in the pathway lipid metabolism; bile acid biosynthesis. In terms of biological role, functions in the bile acid 7alpha-dehydroxylation pathway, which forms secondary bile acids via the 7alpha-dehydroxylation of primary bile acids, and is carried out by intestinal anaerobic bacteria. Catalyzes the dehydration step in this pathway, yielding a 3-oxo-Delta(4,6)-bile acid-CoA intermediate. In vitro, can act on the free bile acids (non CoA-conjugated) 7-alpha,12-alpha-dihydroxy-3-oxochol-4-enoate and 7-alpha-hydroxy-3-oxochol-4-enoate, but not on 7-alpha,12-alpha-dihydroxy-3-oxo-5-beta-cholanate, 3-alpha,7-alpha,12-alpha-trihydroxy-5-beta-cholanate or 7-beta-hydroxy-3-oxochol-4-enoate. This chain is Bile acid 7alpha-dehydratase, found in Clostridium scindens (strain JCM 10418 / VPI 12708).